The primary structure comprises 245 residues: Ubiquinone/menaquinone biosynthesis C-methyltransferase UbiE (245 aa).

Residues Thr-71, Asp-92, and 118–119 (DA) contribute to the S-adenosyl-L-methionine site.

This sequence belongs to the class I-like SAM-binding methyltransferase superfamily. MenG/UbiE family.

It catalyses the reaction a 2-demethylmenaquinol + S-adenosyl-L-methionine = a menaquinol + S-adenosyl-L-homocysteine + H(+). It carries out the reaction a 2-methoxy-6-(all-trans-polyprenyl)benzene-1,4-diol + S-adenosyl-L-methionine = a 5-methoxy-2-methyl-3-(all-trans-polyprenyl)benzene-1,4-diol + S-adenosyl-L-homocysteine + H(+). Its pathway is quinol/quinone metabolism; menaquinone biosynthesis; menaquinol from 1,4-dihydroxy-2-naphthoate: step 2/2. The protein operates within cofactor biosynthesis; ubiquinone biosynthesis. Functionally, methyltransferase required for the conversion of demethylmenaquinol (DMKH2) to menaquinol (MKH2) and the conversion of 2-polyprenyl-6-methoxy-1,4-benzoquinol (DDMQH2) to 2-polyprenyl-3-methyl-6-methoxy-1,4-benzoquinol (DMQH2). This is Ubiquinone/menaquinone biosynthesis C-methyltransferase UbiE from Neisseria gonorrhoeae (strain ATCC 700825 / FA 1090).